Here is a 394-residue protein sequence, read N- to C-terminus: [Pyruvate dehydrogenase (acetyl-transferring)] kinase 1, mitochondrial (394 aa).

The transit peptide at 1–20 (MWKIMRSWKCGGMRWAHRQR) directs the protein to the mitochondrion. In terms of domain architecture, Histidine kinase spans 126 to 386 (AYPYELHNPP…DVYIKLKGPS (261 aa)). A Phosphohistidine; by autocatalysis modification is found at histidine 148. Residues 267–274 (EVFKNAFE), aspartate 304, 323–324 (ST), and 347–352 (GMGFGL) contribute to the ATP site.

The protein belongs to the PDK/BCKDK protein kinase family. Interacts with PKP2.

The protein resides in the mitochondrion matrix. The enzyme catalyses L-seryl-[pyruvate dehydrogenase E1 alpha subunit] + ATP = O-phospho-L-seryl-[pyruvate dehydrogenase E1 alpha subunit] + ADP + H(+). Inhibits the mitochondrial pyruvate dehydrogenase complex by phosphorylation of the E1 alpha subunit (PDA1), thus contributing to the regulation of glucose metabolism. Also involved in telomere maintenance. This is [Pyruvate dehydrogenase (acetyl-transferring)] kinase 1, mitochondrial from Saccharomyces cerevisiae (strain ATCC 204508 / S288c) (Baker's yeast).